We begin with the raw amino-acid sequence, 390 residues long: GTPase Obg (390 aa).

The Obg domain maps to 1–159 (MKFIDESLIR…RDLLLELMLL (159 aa)). The 174-residue stretch at 160 to 333 (ADVGMLGLPN…LCRDIMDFII (174 aa)) folds into the OBG-type G domain. GTP-binding positions include 166-173 (GLPNAGKS), 191-195 (FTTLV), 213-216 (DIPG), 283-286 (NKID), and 314-316 (SAA). Mg(2+)-binding residues include Ser-173 and Thr-193. The interval 363 to 382 (EHQFDDDEDWDDDWSEEDDE) is disordered. Positions 366 to 382 (FDDDEDWDDDWSEEDDE) are enriched in acidic residues.

This sequence belongs to the TRAFAC class OBG-HflX-like GTPase superfamily. OBG GTPase family. Monomer. Mg(2+) is required as a cofactor.

The protein resides in the cytoplasm. Functionally, an essential GTPase which binds GTP, GDP and possibly (p)ppGpp with moderate affinity, with high nucleotide exchange rates and a fairly low GTP hydrolysis rate. Plays a role in control of the cell cycle, stress response, ribosome biogenesis and in those bacteria that undergo differentiation, in morphogenesis control. The chain is GTPase Obg from Haemophilus influenzae (strain ATCC 51907 / DSM 11121 / KW20 / Rd).